The sequence spans 1969 residues: Echinoderm microtubule-associated protein-like 5 (1969 aa).

WD repeat units lie at residues 59–100 (GHSD…TISV), 104–145 (VHTH…MLSM), 148–187 (GHTD…LTPK), 195–233 (GDLQ…RTIQ), 235–273 (AHAA…TVID), 280–321 (GYKG…LIMQ), 323–362 (HCEG…LIAR), 406–445 (DRKE…KKVG), 449–488 (GSLS…EVTS), and 561–601 (GHSA…KLKD). Residues 609-633 (ESLADSHSDESDSDLSDVPELDSEI) form a disordered region. Over residues 619-633 (SDSDLSDVPELDSEI) the composition is skewed to acidic residues. 9 WD repeats span residues 725–766 (GHDD…PLSI), 770–811 (HHQY…KLSI), 814–853 (GSKD…LIGR), 861–900 (GKND…KTVK), 901–940 (AHDG…KTYA), 996–1035 (HMEG…CMLA), 1038–1077 (KLKK…DLVS), 1080–1120 (HRKD…RVGI), and 1236–1276 (AHST…YREK). 2 disordered regions span residues 1274 to 1297 (REKR…YDSD) and 1326 to 1355 (QQKE…NVGK). The segment covering 1281–1294 (SEESDIDSEEDGGY) has biased composition (acidic residues). The span at 1326 to 1337 (QQKEPSIDERPP) shows a compositional bias: basic and acidic residues. 10 WD repeats span residues 1412-1463 (EHND…TLSI), 1467-1508 (YHSK…KIAS), 1511-1550 (GHNQ…LLSK), 1560-1598 (ARMQ…RIVA), 1600-1646 (AHNG…RAFR), 1691-1731 (GHVD…MLNK), 1733-1774 (NLGH…GKKR), 1775-1814 (DRRC…TLNR), 1887-1926 (AEKA…KFAK), and 1932-1969 (GHSP…HTPH).

Belongs to the WD repeat EMAP family.

The protein localises to the cytoplasm. Its subcellular location is the cytoskeleton. Functionally, may modify the assembly dynamics of microtubules, such that microtubules are slightly longer, but more dynamic. This Homo sapiens (Human) protein is Echinoderm microtubule-associated protein-like 5 (EML5).